The sequence spans 236 residues: Large ribosomal subunit protein eL6 (236 aa).

Belongs to the eukaryotic ribosomal protein eL6 family.

The chain is Large ribosomal subunit protein eL6 (rpl6) from Dictyostelium discoideum (Social amoeba).